Consider the following 473-residue polypeptide: Reticulon-4 receptor (473 aa).

A signal peptide spans Met-1 to Pro-26. 2 disulfides stabilise this stretch: Cys-27–Cys-33 and Cys-31–Cys-43. Positions Cys-27–Gly-54 constitute an LRRNT domain. LRR repeat units follow at residues Ile-55–Ala-79, Arg-81–Gly-103, Leu-104–Gly-128, Leu-129–Gly-152, Leu-153–Asp-176, Gly-178–Gly-200, His-202–Asp-224, Leu-225–Pro-248, and Arg-250–Ala-273. A glycan (N-linked (GlcNAc...) asparagine) is linked at Asn-82. The N-linked (GlcNAc...) asparagine glycan is linked to Asn-179. The LRRCT domain occupies Asn-260–Ala-310. 3 cysteine pairs are disulfide-bonded: Cys-264–Cys-287, Cys-266–Cys-335, and Cys-309–Cys-336. The segment at Val-346 to Ser-447 is disordered. Residues Pro-413–Cys-429 are compositionally biased toward basic residues. Positions Ala-434 to Glu-445 are enriched in gly residues. Ser-447 is lipidated: GPI-anchor amidated serine. A propeptide spans Gly-448–Cys-473 (removed in mature form).

This sequence belongs to the Nogo receptor family. Homodimer. Interacts with MAG. Interacts with RTN4. Interacts with NGFR. Interacts with LINGO1. Interacts with KIAA0319L. Interacts with OLFM1; this inhibits interaction with LINGO1 and NGFR. Interacts with OMG. In terms of processing, N-glycosylated. O-glycosylated. Contains terminal sialic acid groups on its glycan chains. As to expression, widespread in the brain but highest levels in the gray matter. Low levels in heart and kidney; not expressed in oligodendrocytes (white matter).

The protein resides in the cell membrane. It is found in the membrane raft. Its subcellular location is the cell projection. It localises to the dendrite. The protein localises to the axon. The protein resides in the perikaryon. In terms of biological role, receptor for RTN4, OMG and MAG. Functions as a receptor for the sialylated gangliosides GT1b and GM1. Besides, functions as a receptor for chondroitin sulfate proteoglycans. Can also bind heparin. Intracellular signaling cascades are triggered via the coreceptor NGFR. Signaling mediates activation of Rho and downstream reorganization of the actin cytoskeleton. Mediates axonal growth inhibition. Plays a role in regulating axon regeneration and neuronal plasticity in the adult central nervous system. Plays a role in postnatal brain development. Required for normal axon migration across the brain midline and normal formation of the corpus callosum. Protects motoneurons against apoptosis; protection against apoptosis is probably mediated via interaction with MAG. Acts in conjunction with RTN4 and LINGO1 in regulating neuronal precursor cell motility during cortical development. Like other family members, plays a role in restricting the number dendritic spines and the number of synapses that are formed during brain development. This Homo sapiens (Human) protein is Reticulon-4 receptor (RTN4R).